Here is a 670-residue protein sequence, read N- to C-terminus: Carnitine O-acetyltransferase, mitochondrial (670 aa).

Residue histidine 378 is the Proton acceptor of the active site. CoA-binding positions include lysine 461 and 465-472 (KRHGMSPD). Tyrosine 494 contacts (R)-carnitine. Residue serine 498 participates in CoA binding. Threonine 507 is a (R)-carnitine binding site. Glutamine 597 provides a ligand contact to CoA. The short motif at 668–670 (AKL) is the Microbody targeting signal element.

It belongs to the carnitine/choline acetyltransferase family.

It localises to the mitochondrion inner membrane. Its subcellular location is the peroxisome. It catalyses the reaction (R)-carnitine + acetyl-CoA = O-acetyl-(R)-carnitine + CoA. Carnitine acetylase is specific for short chain fatty acids. Carnitine acetylase seems to affect the flux through the pyruvate dehydrogenase complex. It may be involved as well in the transport of acetyl-CoA into mitochondria. This Saccharomyces cerevisiae (strain ATCC 204508 / S288c) (Baker's yeast) protein is Carnitine O-acetyltransferase, mitochondrial (CAT2).